We begin with the raw amino-acid sequence, 473 residues long: Eukaryotic translation initiation factor 2 subunit gamma (473 aa).

Residues Gln40–Tyr250 form the tr-type G domain. The interval Gly49–Ser56 is G1. Ala52–Ser57 serves as a coordination point for GTP. Residues Asn77 to Lys81 form a G2 region. The interval Asp135–Gly138 is G3. GTP is bound by residues Asn193 to Asp196 and Ser228 to Gln230. Positions Asn193–Asp196 are G4. The G5 stretch occupies residues Ser228–Gln230. Positions Gly458 to Val470 are interacts with CDC123.

It belongs to the TRAFAC class translation factor GTPase superfamily. Classic translation factor GTPase family. EIF2G subfamily. In terms of assembly, eukaryotic translation initiation factor 2 eIF2 is a heterotrimeric complex composed of an alpha, a beta and a gamma subunit. The factors eIF-1, eIF-2, eIF-3, TIF5/eIF-5 and methionyl-tRNAi form a multifactor complex (MFC) that may bind to the 40S ribosome.

Its subcellular location is the cytoplasm. It is found in the cytosol. It carries out the reaction GTP + H2O = GDP + phosphate + H(+). In terms of biological role, as a subunit of eukaryotic initiation factor 2 eIF2, involved in the early steps of protein synthesis. In the presence of GTP, eIF-2 forms a ternary complex with initiator tRNA Met-tRNAi and then recruits the 40S ribosomal complex and initiation factors eIF-1, eIF-1A and eIF-3 to form the 43S pre-initiation complex (43S PIC), a step that determines the rate of protein translation. The 43S PIC binds to mRNA and scans downstream to the initiation codon, where it forms a 48S initiation complex by codon-anticodon base pairing. This leads to the displacement of eIF-1 to allow GTPase-activating protein (GAP) eIF-5-mediated hydrolysis of eIF2-bound GTP. Hydrolysis of GTP and release of Pi, which makes GTP hydrolysis irreversible, causes the release of the eIF-2-GDP binary complex from the 40S subunit, an event that is essential for the subsequent joining of the 60S ribosomal subunit to form an elongation-competent 80S ribosome. In order for eIF-2 to recycle and catalyze another round of initiation, the GDP bound to eIF-2 must be exchanged with GTP by way of a reaction catalyzed by GDP-GTP exchange factor (GEF) eIF-2B. This is Eukaryotic translation initiation factor 2 subunit gamma from Cryptococcus neoformans var. grubii serotype A (strain H99 / ATCC 208821 / CBS 10515 / FGSC 9487) (Filobasidiella neoformans var. grubii).